A 71-amino-acid chain; its full sequence is uncharacterized protein (71 aa).

The next 2 helical transmembrane spans lie at 9-29 (FVIF…NINF) and 41-61 (FVAL…FFGL).

The protein localises to the membrane. This is an uncharacterized protein from Acheta domesticus (House cricket).